We begin with the raw amino-acid sequence, 278 residues long: Small ribosomal subunit protein uS3 (278 aa).

The region spanning 38-106 is the KH type-2 domain; it reads IRKLLSKGME…QVQLNILEVK (69 aa). Positions 213 to 278 are disordered; that stretch reads RQAQAAARAG…APAPAENQEG (66 aa). The span at 214–223 shows a compositional bias: low complexity; the sequence is QAQAAARAGV. The segment covering 232–253 has biased composition (basic and acidic residues); the sequence is RGGERPSRGSRGDRPTRADRGG. The segment covering 259 to 278 has biased composition (low complexity); the sequence is EATGAATEQAAPAPAENQEG.

It belongs to the universal ribosomal protein uS3 family. In terms of assembly, part of the 30S ribosomal subunit. Forms a tight complex with proteins S10 and S14.

In terms of biological role, binds the lower part of the 30S subunit head. Binds mRNA in the 70S ribosome, positioning it for translation. The sequence is that of Small ribosomal subunit protein uS3 from Nocardioides sp. (strain ATCC BAA-499 / JS614).